The sequence spans 662 residues: Glycine--tRNA ligase beta subunit (662 aa).

This sequence belongs to the class-II aminoacyl-tRNA synthetase family. In terms of assembly, tetramer of two alpha and two beta subunits.

It is found in the cytoplasm. The enzyme catalyses tRNA(Gly) + glycine + ATP = glycyl-tRNA(Gly) + AMP + diphosphate. In Rickettsia akari (strain Hartford), this protein is Glycine--tRNA ligase beta subunit.